The primary structure comprises 453 residues: Wall-associated protein (453 aa).

The N-terminal stretch at 1–29 (MKMKRKLLSLVSVLTILLGAFWVTKIVKA) is a signal peptide. Positions 331–403 (GRASSRVKRQ…TASQTNVPTT (73 aa)) are disordered. The span at 342–403 (ETTTVTETTT…TASQTNVPTT (62 aa)) shows a compositional bias: low complexity. Residues 422–426 (LPSTG) carry the LPXTG sorting signal motif. Thr-425 carries the pentaglycyl murein peptidoglycan amidated threonine modification. Residues 426–453 (GEQAGLLLTTVGLVIVAVAGVYFYRTRR) constitute a propeptide, removed by sortase.

It is found in the secreted. The protein resides in the cell wall. In Streptococcus mutans serotype c (strain ATCC 700610 / UA159), this protein is Wall-associated protein (wapA).